The chain runs to 390 residues: Putative nickel insertion protein (390 aa).

Belongs to the LarC family.

This Geotalea daltonii (strain DSM 22248 / JCM 15807 / FRC-32) (Geobacter daltonii) protein is Putative nickel insertion protein.